A 382-amino-acid polypeptide reads, in one-letter code: Lactaldehyde reductase (382 aa).

Residues Asp38, Asn70, 97-98 (GS), 139-143 (TTAGT), Asn150, Lys161, and 180-184 (MMDGM) contribute to the NAD(+) site. Asp195, His199, His262, and His276 together coordinate Fe cation.

This sequence belongs to the iron-containing alcohol dehydrogenase family. In terms of assembly, homodimer. The cofactor is Fe cation.

The enzyme catalyses (R)-propane-1,2-diol + NAD(+) = (R)-lactaldehyde + NADH + H(+). It carries out the reaction (S)-propane-1,2-diol + NAD(+) = (S)-lactaldehyde + NADH + H(+). Its pathway is carbohydrate degradation; L-fucose degradation. The protein is Lactaldehyde reductase (fucO) of Escherichia coli O157:H7.